Here is a 455-residue protein sequence, read N- to C-terminus: Epoxide hydrolase 1 (455 aa).

A helical; Signal-anchor for type III membrane protein membrane pass occupies residues Met-1–Arg-21. Residues Asp-22–Gln-455 are Cytoplasmic-facing. Asp-226 functions as the Nucleophile in the catalytic mechanism. The residue at position 295 (Arg-295) is a Dimethylated arginine. Tyr-374 serves as the catalytic Proton donor. His-431 (proton acceptor) is an active-site residue. Lys-439 is subject to N6-acetyllysine.

This sequence belongs to the peptidase S33 family.

The protein resides in the microsome membrane. It is found in the endoplasmic reticulum membrane. It catalyses the reaction cis-stilbene oxide + H2O = (1R,2R)-hydrobenzoin. It carries out the reaction 1-(4-methoxyphenyl)-N-methyl-N-[(3-methyloxetan-3-yl)methyl]methanamine + H2O = 2-{[(4-methoxybenzyl)(methyl)amino]methyl}-2-methylpropane-1,3-diol. The enzyme catalyses 8,9-epoxy-(5Z,11Z,14Z)-eicosatrienoate + H2O = 8,9-dihydroxy-(5Z,11Z,14Z)-eicosatrienoate. The catalysed reaction is 11,12-epoxy-(5Z,8Z,14Z)-eicosatrienoate + H2O = 11,12-dihydroxy-(5Z,8Z,14Z)-eicosatrienoate. It catalyses the reaction 2-(5Z,8Z,11Z,14Z-eicosatetraenoyl)-glycerol + H2O = glycerol + (5Z,8Z,11Z,14Z)-eicosatetraenoate + H(+). With respect to regulation, inhibited by 10-hydroxystearamide and methoxy-arachidonyl fluorophosphate. Functionally, biotransformation enzyme that catalyzes the hydrolysis of arene and aliphatic epoxides to less reactive and more water soluble dihydrodiols by the trans addition of water. May play a role in the metabolism of endogenous lipids such as epoxide-containing fatty acids. Metabolizes the abundant endocannabinoid 2-arachidonoylglycerol (2-AG) to free arachidonic acid (AA) and glycerol. Binds 20(S)-hydroxycholesterol (20(S)-OHC). This is Epoxide hydrolase 1 from Mus musculus (Mouse).